A 617-amino-acid polypeptide reads, in one-letter code: MSSARLCSLVAELGYEGAGKLDPDSFEWPFQYDDARPILDWICSSLRPSNVLSLAELSLYEQFQRDGKLLEGDDLDQAYDSISAFSSRRNNQEAVFGAEESIKEVRDATLAHKAEALELQRQLRRLQTQYDLLTGQSSALIQGRRARVAATSAVSGQITAIEDSLSARNLQMNGVLGRLASTSQELAHYHSGEEDGIYLAYSDFHAYLAGDSACTKELNQWFAKQLDTGPYRLVAEEGKSKCSWVSLDDTSNMLRDLEKSQHQRVAELQRLRSIFGTSERQWIEAQVENAKQQAILLTLKSQVTSVEAHIHFDLHSLRRKHADLVEEISTLYQKEEKLLSETIPELCWELAQLQDTYILQGDYDLKVMRQELYISKQKVFINHLVNQLARHQFLKLACQLEKKNMLGAFSLLKVIESELQGYLSATRSRVGRCSALIQAASDVQEQGAVDDRDSFLHGVRDLLSIHSNTQAGLSTYVSAPAIIQQIVALQSDLSSLQSDLENSLPDDRNRCINELCTHIQNLQQLLFASSTTAQPILTPWPLMKELDEMGKINSKLSTAVEEVTLEHRNKREIVKHHAKDVELQRRVFVDFFCNPERLRNQVRELNALVRARQASSS.

Coiled coils occupy residues 107 to 140 (DATL…SSAL), 314 to 334 (LHSL…LYQK), and 481 to 504 (AIIQ…ENSL).

This sequence belongs to the HAUS3 family. Part of the augmin complex composed of 8 subunits. The complex acts on microtubules and interacts with gamma-tubulin in spindles and the phragmoplast. Interacts with AUG1.

It is found in the cytoplasm. Its subcellular location is the cytoskeleton. The protein resides in the spindle. The protein localises to the phragmoplast. In terms of biological role, involved in microtubules reorganization during spindle and phragmoplast development. Required for gamma-tubulin localization during mitosis. This is AUGMIN subunit 3 from Arabidopsis thaliana (Mouse-ear cress).